The sequence spans 468 residues: ATP synthase subunit beta (468 aa).

155 to 162 (GGAGVGKT) serves as a coordination point for ATP.

Belongs to the ATPase alpha/beta chains family. F-type ATPases have 2 components, CF(1) - the catalytic core - and CF(0) - the membrane proton channel. CF(1) has five subunits: alpha(3), beta(3), gamma(1), delta(1), epsilon(1). CF(0) has three main subunits: a(1), b(2) and c(9-12). The alpha and beta chains form an alternating ring which encloses part of the gamma chain. CF(1) is attached to CF(0) by a central stalk formed by the gamma and epsilon chains, while a peripheral stalk is formed by the delta and b chains.

The protein localises to the cell membrane. The enzyme catalyses ATP + H2O + 4 H(+)(in) = ADP + phosphate + 5 H(+)(out). Functionally, produces ATP from ADP in the presence of a proton gradient across the membrane. The catalytic sites are hosted primarily by the beta subunits. The polypeptide is ATP synthase subunit beta (Streptococcus pneumoniae (strain ATCC BAA-255 / R6)).